We begin with the raw amino-acid sequence, 31 residues long: Cytochrome b6-f complex subunit 6 (31 aa).

The helical transmembrane segment at 4–24 (LLSYFAFLMLALTFTLALFVG) threads the bilayer.

This sequence belongs to the PetL family. The 4 large subunits of the cytochrome b6-f complex are cytochrome b6, subunit IV (17 kDa polypeptide, PetD), cytochrome f and the Rieske protein, while the 4 small subunits are PetG, PetL, PetM and PetN. The complex functions as a dimer.

It localises to the plastid. Its subcellular location is the chloroplast thylakoid membrane. Component of the cytochrome b6-f complex, which mediates electron transfer between photosystem II (PSII) and photosystem I (PSI), cyclic electron flow around PSI, and state transitions. PetL is important for photoautotrophic growth as well as for electron transfer efficiency and stability of the cytochrome b6-f complex. This is Cytochrome b6-f complex subunit 6 from Adiantum capillus-veneris (Maidenhair fern).